Consider the following 103-residue polypeptide: UPF0102 protein aq_041 (103 aa).

The protein belongs to the UPF0102 family.

The protein is UPF0102 protein aq_041 of Aquifex aeolicus (strain VF5).